The chain runs to 329 residues: Ribosomal RNA small subunit methyltransferase H (329 aa).

S-adenosyl-L-methionine contacts are provided by residues 34-36 (GGY), Asp-52, Phe-79, Asp-100, and Gln-107. The tract at residues 285-329 (GEDEVAHNPRARSAKLRAAERTSAPAHKDDQSSSWPRLSDVMRGG) is disordered.

Belongs to the methyltransferase superfamily. RsmH family.

The protein localises to the cytoplasm. It catalyses the reaction cytidine(1402) in 16S rRNA + S-adenosyl-L-methionine = N(4)-methylcytidine(1402) in 16S rRNA + S-adenosyl-L-homocysteine + H(+). Specifically methylates the N4 position of cytidine in position 1402 (C1402) of 16S rRNA. The chain is Ribosomal RNA small subunit methyltransferase H from Bradyrhizobium diazoefficiens (strain JCM 10833 / BCRC 13528 / IAM 13628 / NBRC 14792 / USDA 110).